Consider the following 386-residue polypeptide: Acyl-CoA ligase lcsD (386 aa).

Residues 62-132 (ELEQTLLAIQ…ELLPACKIIQ (71 aa)) form an SBD1 region. 107–115 (AVGASGISK) contacts ATP. Residues 133 to 195 (GYGMTETTGV…LRSPSVVIGY (63 aa)) are SBD2. Residue Thr-137 coordinates substrate. ATP is bound by residues Asp-216 and Arg-235. CoA contacts are provided by residues 243–245 (RGL) and 313–316 (HLDG). Position 331 (Lys-331) interacts with ATP. Residues 352-386 (REKAANGVHKVHVNGVKRPEKMEVFDLSSDDEDDD) are disordered.

The protein belongs to the ATP-dependent AMP-binding enzyme family.

The protein operates within secondary metabolite biosynthesis. Functionally, acyl-CoA ligase; part of the gene cluster that mediates the biosynthesis of the lipopeptide antibiotics leucinostatins that show extensive biological activities, including antimalarial, antiviral, antibacterial, antifungal, and antitumor activities, as well as phytotoxic. Leucinostatin A contains nine amino acid residues, including the unusual amino acid 4-methyl-L-proline (MePro), 2-amino-6-hydroxy-4-methyl-8-oxodecanoic acid (AHyMeOA), 3-hydroxyleucine (HyLeu), alpha-aminoisobutyric acid (AIB), beta-Ala, a 4-methylhex-2-enoic acid at the N-terminus as well as a N1,N1-dimethylpropane-1,2-diamine (DPD) at the C-terminus. The biosynthesis of leucinostatins is probably initiated with the assembly of 4-methylhex-2-enoic acid by a reducing PKS. Two reducing polyketide synthases, lcsB and lcsC, have been identified in the cluster and it is not clear which is the one that assembles 4-methylhex-2-enoic acid since both contain KS, AT, DH, cMT, ER, KR and ACP domains. The polyketide residue might be transferred to the NRPS lcsA, mediated by two additional enzymes, the acyl-CoA ligase lcsD and the thioesterase lcsE. The linear polyketide carboxylic acid, which is released from PKS, is converted to a CoA thioester by lcsD, and then lcsE hydrolyzes the thiol bond and shuttles the polyketide intermediate to lcsA. The C domain of the first module catalyzed the condensation of 4-methylhex-2-enoic acid and MePro carried by domain A1, followed by successive condensations of nine amino acids to trigger the elongation of the linear peptide. A5 and A6 domains of lcsA are proposed to incorporate leucine, A2 AHyMeOA, and A3 incorporates HyLeu. A4, A7 and A8 incorporate AIB. The AHyMeOA in leucinostatin A activated by the A2 might be produced by the second PKS (lcsB or lcsC) present within the cluster. The MePro is probably produced via leucine cyclization and may originate from a separate pathway, independent of the cluster. Another nonproteinogenic amino acid, beta-Ala, could be produced by an aspartic acid decarboxylase also localized outside of the cluster. Two candidates are VFPBJ_01400 and VFPBJ_10476. The final peptide scaffold may be released by the NAD(P)H-dependent thioester reductase (TE) at the C-terminal region of lcsA. Transamination of the lcsA product by the transaminase lcsP may produce DPD at the C-terminus. Further hydroxylation steps performed alternatively by the cytochrome P450 monooxygenases lcsI, lcsK and lcsN then yield the non-methylated leucinostatins precursor. It is also possible that leucines can be hydroxylated prior to their incorporation into the peptide. Varying extents of methylation then lead to the formation of leucinostatins A and B. In Purpureocillium lilacinum (Paecilomyces lilacinus), this protein is Acyl-CoA ligase lcsD.